The chain runs to 232 residues: Thiamine import ATP-binding protein ThiQ (232 aa).

Positions leucine 2–isoleucine 230 constitute an ABC transporter domain. Position 32-39 (glycine 32–serine 39) interacts with ATP.

The protein belongs to the ABC transporter superfamily. Thiamine importer (TC 3.A.1.19.1) family. The complex is composed of two ATP-binding proteins (ThiQ), two transmembrane proteins (ThiP) and a solute-binding protein (ThiB).

The protein resides in the cell inner membrane. It carries out the reaction thiamine(out) + ATP + H2O = thiamine(in) + ADP + phosphate + H(+). In terms of biological role, part of the ABC transporter complex ThiBPQ involved in thiamine import. Responsible for energy coupling to the transport system. In Escherichia coli (strain UTI89 / UPEC), this protein is Thiamine import ATP-binding protein ThiQ.